The primary structure comprises 401 residues: Type 3 secretion system translocon protein SctE (401 aa).

Residues 129–160 are a coiled coil; the sequence is IQRLHEQNMKKIEENQEKIKETEENAKQVKKS. Transmembrane regions (helical) follow at residues 176 to 196 and 224 to 244; these read VIVG…AMMV and ILGP…TVMT. Residues 345–379 are a coiled coil; that stretch reads LALNKADMAALQSIIDRLKEELSHLSESHQQVMEL.

This sequence belongs to the SctE/SipB/YopB family. The core secretion machinery of the T3SS is composed of approximately 20 different proteins, including cytoplasmic components, a base, an export apparatus and a needle. This subunit is involved in the formation of a pore, called the translocon, in host membrane. Interacts with YopD/SctB. Together with YopD/SctB, forms a multimeric integral membrane complex.

Its subcellular location is the secreted. The protein resides in the host membrane. Functionally, component of the type III secretion system (T3SS), also called injectisome, which is used to inject bacterial effector proteins into eukaryotic host cells. YopB/SctE and YopD/SctB are inserted into the host membrane where they form a pore and allow the translocation of effector proteins into the cytosol of target cells. Is an essential virulence determinant. Required for YopE and YopH translocation. Shows membrane disruptive activity in vitro. In terms of biological role, interaction with the host cell triggers a signaling response, via activation of the small GTPase Ras, the MAPK kinases ERK and JNK and the nuclear factor NF-kappa-B pathways, and production of the proinflammatory cytokine interleukin-8 (IL-8). YopB/SctE-dependent signaling response is counteracted by YopE, YopH and YopJ in infected host cells. YopB/SctE is directly responsible for signaling and its insertion in the membrane is important to activate the signaling response in the host cell. The chain is Type 3 secretion system translocon protein SctE from Yersinia pseudotuberculosis serotype I (strain IP32953).